The chain runs to 313 residues: Aspartate carbamoyltransferase catalytic subunit (313 aa).

Residues R58 and T59 each contribute to the carbamoyl phosphate site. Residue K86 participates in L-aspartate binding. Carbamoyl phosphate contacts are provided by R108, H136, and Q139. L-aspartate contacts are provided by R169 and R223. 2 residues coordinate carbamoyl phosphate: G265 and P266.

It belongs to the aspartate/ornithine carbamoyltransferase superfamily. ATCase family. Heterododecamer (2C3:3R2) of six catalytic PyrB chains organized as two trimers (C3), and six regulatory PyrI chains organized as three dimers (R2).

The enzyme catalyses carbamoyl phosphate + L-aspartate = N-carbamoyl-L-aspartate + phosphate + H(+). It participates in pyrimidine metabolism; UMP biosynthesis via de novo pathway; (S)-dihydroorotate from bicarbonate: step 2/3. In terms of biological role, catalyzes the condensation of carbamoyl phosphate and aspartate to form carbamoyl aspartate and inorganic phosphate, the committed step in the de novo pyrimidine nucleotide biosynthesis pathway. The sequence is that of Aspartate carbamoyltransferase catalytic subunit from Anaeromyxobacter sp. (strain K).